We begin with the raw amino-acid sequence, 1705 residues long: Clathrin heavy chain 1 (1705 aa).

Ala2 bears the N-acetylalanine mark. The segment at 2–492 is globular terminal domain; it reads AAANAPIIMK…VDNDLALKIY (491 aa). 7 WD40-like repeat regions span residues 25-67, 68-113, 114-155, 156-205, 206-270, 271-314, and 315-343; these read FITF…RPIT, ADSA…MPEQ, VAFW…ANLA, NNQI…QALE, AHAA…PDFA, DDFP…ISPD, and PIFLTSEASSVGGFYAINRRGQVLLATVN. Residues 462-478 are binding site for the uncoating ATPase, involved in lattice disassembly; sequence ENWLAEDKLECSEELGD. Residues 493-536 form a flexible linker region; sequence IKARATPKVVAAFAERREFDKILIYSKQVGYTPDYMFLLQTILR. Residues 537–648 are distal segment; that stretch reads TDPQGAVNFA…QSLKHYSELP (112 aa). The segment at 537–1705 is heavy chain arm; sequence TDPQGAVNFA…PYGMPPMGGY (1169 aa). CHCR repeat units follow at residues 551 to 697, 700 to 842, 847 to 986, 993 to 1138, 1142 to 1283, 1288 to 1434, and 1437 to 1580; these read QMEG…QIIV, CKEY…PEDF, ILSV…QLID, LPES…VSDA, FIRA…FRLA, LNII…DIIN, and LNVL…KECF. Positions 653 to 1705 are proximal segment; that stretch reads VIVNTHAIEP…PYGMPPMGGY (1053 aa). Residues 1227–1536 are involved in binding clathrin light chain; the sequence is AAKIIYAFIS…YIYKKAGRWK (310 aa). Positions 1564–1705 are trimerization; it reads AEQLLVYFIE…PYGMPPMGGY (142 aa).

Belongs to the clathrin heavy chain family. Clathrin triskelions, composed of 3 heavy chains and 3 light chains, are the basic subunits of the clathrin coat. Interacts with SCYL2B.

It localises to the cytoplasmic vesicle membrane. It is found in the membrane. Its subcellular location is the coated pit. Functionally, clathrin is the major protein of the polyhedral coat of coated pits and vesicles. Mediates endocytosis and is required for a correct polar distribution of PIN auxin transporters. This Arabidopsis thaliana (Mouse-ear cress) protein is Clathrin heavy chain 1.